A 137-amino-acid chain; its full sequence is Protein MGF 110-7L (137 aa).

The signal sequence occupies residues 1–20 (MLVIILGVIGLLASSNLVSS). Residues Asn-69, Asn-70, and Asn-105 are each glycosylated (N-linked (GlcNAc...) asparagine; by host).

The protein belongs to the asfaviruses V110 family.

This Ornithodoros (relapsing fever ticks) protein is Protein MGF 110-7L.